Reading from the N-terminus, the 601-residue chain is Lanthanide-dependent methanol dehydrogenase (601 aa).

A signal peptide spans 1-21 (MRAVHLLALGAGLAAASPALA). A disulfide bond links Cys-124 and Cys-125. Pyrroloquinoline quinone contacts are provided by Arg-130, Thr-174, Ser-189, Gly-190, and Gly-191. Glu-192 lines the La(3+) pocket. Residues Cys-197 and Cys-256 are joined by a disulfide bond. Trp-258 lines the pyrroloquinoline quinone pocket. La(3+) is bound by residues Asn-276, Asp-318, and Asp-320. The active-site Proton acceptor is the Asp-318. Arg-345 lines the pyrroloquinoline quinone pocket. A disulfide bond links Cys-408 and Cys-437. Residues Trp-494 and Trp-558 each contribute to the pyrroloquinoline quinone site.

This sequence belongs to the bacterial PQQ dehydrogenase family. In terms of assembly, homodimer. La(3+) serves as cofactor. The cofactor is Nd(3+). Pyrroloquinoline quinone is required as a cofactor.

The protein resides in the periplasm. It catalyses the reaction 2 Fe(III)-[cytochrome cL] + methanol = 2 Fe(II)-[cytochrome cL] + formaldehyde + 2 H(+). In terms of biological role, catalyzes the oxidation of methanol to formaldehyde, but only in the presence of lanthanides (Ln). Contributes to methanol metabolism when La(3+) is present in the natural environment of the bacterium, allowing bacterial growth with methanol as carbon and energy source. Thereby is an essential enzyme for Ln-dependent methylotrophy. Uses a specific cytochrome cL (XoxG), encoded by the adjacent gene in the locus, as electron acceptor. Also plays a role in the transcriptional regulation of the mxa and xox1 operons, most likely acting as a lanthanide sensory module. Is also able to oxidize formaldehyde to formate in vitro, but this activity does not occur in vivo. The sequence is that of Lanthanide-dependent methanol dehydrogenase from Methylorubrum extorquens (strain ATCC 14718 / DSM 1338 / JCM 2805 / NCIMB 9133 / AM1) (Methylobacterium extorquens).